We begin with the raw amino-acid sequence, 229 residues long: Enolase-phosphatase E1 (229 aa).

Belongs to the HAD-like hydrolase superfamily. MasA/MtnC family. In terms of assembly, monomer. Mg(2+) is required as a cofactor.

It catalyses the reaction 5-methylsulfanyl-2,3-dioxopentyl phosphate + H2O = 1,2-dihydroxy-5-(methylsulfanyl)pent-1-en-3-one + phosphate. It participates in amino-acid biosynthesis; L-methionine biosynthesis via salvage pathway; L-methionine from S-methyl-5-thio-alpha-D-ribose 1-phosphate: step 3/6. The protein operates within amino-acid biosynthesis; L-methionine biosynthesis via salvage pathway; L-methionine from S-methyl-5-thio-alpha-D-ribose 1-phosphate: step 4/6. Functionally, bifunctional enzyme that catalyzes the enolization of 2,3-diketo-5-methylthiopentyl-1-phosphate (DK-MTP-1-P) into the intermediate 2-hydroxy-3-keto-5-methylthiopentenyl-1-phosphate (HK-MTPenyl-1-P), which is then dephosphorylated to form the acireductone 1,2-dihydroxy-3-keto-5-methylthiopentene (DHK-MTPene). The sequence is that of Enolase-phosphatase E1 from Serratia proteamaculans (strain 568).